The sequence spans 427 residues: 3-phosphoshikimate 1-carboxyvinyltransferase (427 aa).

3-phosphoshikimate contacts are provided by Lys22, Ser23, and Arg27. Lys22 is a phosphoenolpyruvate binding site. Gly96 and Arg124 together coordinate phosphoenolpyruvate. 7 residues coordinate 3-phosphoshikimate: Ser169, Ser170, Gln171, Ser197, Asp313, Asn336, and Lys340. Gln171 contributes to the phosphoenolpyruvate binding site. Asp313 functions as the Proton acceptor in the catalytic mechanism. Residues Arg344, Arg386, and Lys411 each coordinate phosphoenolpyruvate.

This sequence belongs to the EPSP synthase family. As to quaternary structure, monomer.

The protein resides in the cytoplasm. The enzyme catalyses 3-phosphoshikimate + phosphoenolpyruvate = 5-O-(1-carboxyvinyl)-3-phosphoshikimate + phosphate. The protein operates within metabolic intermediate biosynthesis; chorismate biosynthesis; chorismate from D-erythrose 4-phosphate and phosphoenolpyruvate: step 6/7. Its function is as follows. Catalyzes the transfer of the enolpyruvyl moiety of phosphoenolpyruvate (PEP) to the 5-hydroxyl of shikimate-3-phosphate (S3P) to produce enolpyruvyl shikimate-3-phosphate and inorganic phosphate. The polypeptide is 3-phosphoshikimate 1-carboxyvinyltransferase (Salmonella newport (strain SL254)).